The chain runs to 596 residues: DNA polymerase kappa (596 aa).

The 236-residue stretch at 85-320 folds into the UmuC domain; it reads CVCIDMDAYF…LPIRKVGGIG (236 aa). 2 residues coordinate Mg(2+): D89 and D180. Residue E181 is part of the active site. The UBZ4-type zinc-finger motif lies at 516–545; that stretch reads TRPCPICGTDVENRLDVMNCHVDECILKVQ. Zn(2+)-binding residues include C519, C522, H536, and C540. A disordered region spans residues 559-584; sequence NKSTQKPERPSTKKRKLQEKRPKAKK. The span at 570 to 584 shows a compositional bias: basic residues; sequence TKKRKLQEKRPKAKK.

The protein belongs to the DNA polymerase type-Y family. Mg(2+) is required as a cofactor. It depends on Mn(2+) as a cofactor.

It localises to the nucleus. The catalysed reaction is DNA(n) + a 2'-deoxyribonucleoside 5'-triphosphate = DNA(n+1) + diphosphate. Functionally, DNA polymerase specifically involved in DNA repair. Plays an important role in translesion synthesis, where the normal high-fidelity DNA polymerases cannot proceed and DNA synthesis stalls. Depending on the context, it inserts the correct base, but causes frequent base transitions, transversions and frameshifts. Lacks 3'-5' proofreading exonuclease activity. Forms a Schiff base with 5'-deoxyribose phosphate at abasic sites, but does not have lyase activity. In Caenorhabditis elegans, this protein is DNA polymerase kappa (polk-1).